Reading from the N-terminus, the 442-residue chain is Phosphoglucosamine mutase (442 aa).

The active-site Phosphoserine intermediate is the Ser103. Mg(2+)-binding residues include Ser103, Asp241, Asp243, and Asp245. Ser103 is subject to Phosphoserine.

It belongs to the phosphohexose mutase family. Mg(2+) serves as cofactor. Activated by phosphorylation.

It carries out the reaction alpha-D-glucosamine 1-phosphate = D-glucosamine 6-phosphate. Its function is as follows. Catalyzes the conversion of glucosamine-6-phosphate to glucosamine-1-phosphate. The polypeptide is Phosphoglucosamine mutase (Deinococcus deserti (strain DSM 17065 / CIP 109153 / LMG 22923 / VCD115)).